The following is a 273-amino-acid chain: Transposable element Tcb1 transposase (273 aa).

Belongs to the transposase 5 family.

Its subcellular location is the nucleus. Probably essential for transposable element Tcb1 transposition. The insertion of Tcb1 is the main cause of spontaneous mutations. The sequence is that of Transposable element Tcb1 transposase from Caenorhabditis briggsae.